The chain runs to 214 residues: Pyridoxine/pyridoxamine 5'-phosphate oxidase (214 aa).

Substrate-binding positions include 9 to 12 and Lys67; that span reads RKDY. FMN-binding positions include 62-67, 77-78, Arg83, Lys84, and Gln106; these read RMVLLK and FT. Substrate-binding residues include Tyr124, Arg128, and Ser132. FMN-binding positions include 141–142 and Trp186; that span reads QS. 192 to 194 is a substrate binding site; sequence RLH. Arg196 serves as a coordination point for FMN.

The protein belongs to the pyridoxamine 5'-phosphate oxidase family. Homodimer. The cofactor is FMN.

It carries out the reaction pyridoxamine 5'-phosphate + O2 + H2O = pyridoxal 5'-phosphate + H2O2 + NH4(+). The catalysed reaction is pyridoxine 5'-phosphate + O2 = pyridoxal 5'-phosphate + H2O2. It participates in cofactor metabolism; pyridoxal 5'-phosphate salvage; pyridoxal 5'-phosphate from pyridoxamine 5'-phosphate: step 1/1. The protein operates within cofactor metabolism; pyridoxal 5'-phosphate salvage; pyridoxal 5'-phosphate from pyridoxine 5'-phosphate: step 1/1. Functionally, catalyzes the oxidation of either pyridoxine 5'-phosphate (PNP) or pyridoxamine 5'-phosphate (PMP) into pyridoxal 5'-phosphate (PLP). This Nostoc punctiforme (strain ATCC 29133 / PCC 73102) protein is Pyridoxine/pyridoxamine 5'-phosphate oxidase.